A 75-amino-acid polypeptide reads, in one-letter code: Mating pheromone Er-1/Er-3 (75 aa).

The first 19 residues, 1-19 (MNKLAILAIIAMVLFSANA), serve as a signal peptide directing secretion. The propeptide occupies 20–35 (FRFQSRLRSNVEAKTG). Disulfide bonds link Cys-38–Cys-54, Cys-45–Cys-71, and Cys-50–Cys-63.

As to quaternary structure, homodimer.

The protein resides in the secreted. It is found in the cell membrane. In terms of biological role, mating ciliate pheromones (or gamones) are diffusible extracellular communication signals that distinguish different intraspecific classes of cells commonly referred to as 'mating types'. They prepare the latter for conjugation by changing their cell surface properties. The membrane-bound form promotes inter-cellular communication and adhesion for mating pair formation and may act as binding site for the secreted form. The polypeptide is Mating pheromone Er-1/Er-3 (MAT1) (Euplotes raikovi).